Reading from the N-terminus, the 570-residue chain is Periplasmic trehalase (570 aa).

An N-terminal signal peptide occupies residues 1–34 (MIPPEIRRSVLLQKAIKLALAGTLLTFASFSATA). Substrate contacts are provided by residues Arg159, 166-167 (WD), Asn203, 212-214 (RSQ), 284-286 (RPE), and Gly317. Residues Asp319 and Glu503 each act as proton donor/acceptor in the active site. Glu518 serves as a coordination point for substrate. Positions 545-570 (PCDSVPSTRPASLSATPTKTPSAATQ) are disordered. Positions 554–570 (PASLSATPTKTPSAATQ) are enriched in low complexity.

It belongs to the glycosyl hydrolase 37 family. In terms of assembly, monomer.

It localises to the periplasm. The catalysed reaction is alpha,alpha-trehalose + H2O = alpha-D-glucose + beta-D-glucose. Functionally, provides the cells with the ability to utilize trehalose at high osmolarity by splitting it into glucose molecules that can subsequently be taken up by the phosphotransferase-mediated uptake system. This Salmonella agona (strain SL483) protein is Periplasmic trehalase.